Consider the following 352-residue polypeptide: UDP-N-acetylglucosamine--N-acetylmuramyl-(pentapeptide) pyrophosphoryl-undecaprenol N-acetylglucosamine transferase 3 (352 aa).

UDP-N-acetyl-alpha-D-glucosamine is bound by residues Ser-11–Gly-13, Arg-164, Ser-194, and Gln-289.

It belongs to the glycosyltransferase 28 family. MurG subfamily.

The protein localises to the cell membrane. It carries out the reaction di-trans,octa-cis-undecaprenyl diphospho-N-acetyl-alpha-D-muramoyl-L-alanyl-D-glutamyl-meso-2,6-diaminopimeloyl-D-alanyl-D-alanine + UDP-N-acetyl-alpha-D-glucosamine = di-trans,octa-cis-undecaprenyl diphospho-[N-acetyl-alpha-D-glucosaminyl-(1-&gt;4)]-N-acetyl-alpha-D-muramoyl-L-alanyl-D-glutamyl-meso-2,6-diaminopimeloyl-D-alanyl-D-alanine + UDP + H(+). It functions in the pathway cell wall biogenesis; peptidoglycan biosynthesis. Its function is as follows. Cell wall formation. Catalyzes the transfer of a GlcNAc subunit on undecaprenyl-pyrophosphoryl-MurNAc-pentapeptide (lipid intermediate I) to form undecaprenyl-pyrophosphoryl-MurNAc-(pentapeptide)GlcNAc (lipid intermediate II). This is UDP-N-acetylglucosamine--N-acetylmuramyl-(pentapeptide) pyrophosphoryl-undecaprenol N-acetylglucosamine transferase 3 from Bacillus thuringiensis (strain Al Hakam).